The primary structure comprises 121 residues: ATP synthase epsilon chain (121 aa).

It belongs to the ATPase epsilon chain family. F-type ATPases have 2 components, CF(1) - the catalytic core - and CF(0) - the membrane proton channel. CF(1) has five subunits: alpha(3), beta(3), gamma(1), delta(1), epsilon(1). CF(0) has three main subunits: a, b and c.

It is found in the cell membrane. Produces ATP from ADP in the presence of a proton gradient across the membrane. The sequence is that of ATP synthase epsilon chain from Mycobacterium avium (strain 104).